Consider the following 429-residue polypeptide: MLNKDLVDHDLSDEVCELLPASRHKTYVVKVGQVKIGGNNPIVVQSMALGVHIDSDNVKSSAKRYAKEIIELAHAGSELVRIALNSEEVARAVPYIVEEINKEGFDGKILVGCGQYELDKLVRNYPDNIKMLGKIRINPGNIGFGDKHDEKFERVIEYAITHDIPVRIGVNWGSLDKYLLQKLMDENSLSNNPKSSDVILRKALVMSALNSAQKAEEIGLSLDKIVISCKVSRVQDLISVYTALAKSSNYALHLGLTEAGTGNKGMISTTAGLTYLLQNGIGDTIRASLTQRPGEPRVNEVAVCQEILQSIGLRHFNPQVNSCPGCGRTNSDRFRILTEEVNDYIKIRMPTWKKKNPGVEHMNIAVMGCIVNGPGESKHANLGISLPGYGEKPISAVYKDGKYFKTLQGDNIFEEFKAIIDDYVKEHYT.

4 residues coordinate [4Fe-4S] cluster: Cys-323, Cys-326, Cys-369, and Glu-376.

The protein belongs to the IspG family. The cofactor is [4Fe-4S] cluster.

The catalysed reaction is (2E)-4-hydroxy-3-methylbut-2-enyl diphosphate + oxidized [flavodoxin] + H2O + 2 H(+) = 2-C-methyl-D-erythritol 2,4-cyclic diphosphate + reduced [flavodoxin]. It functions in the pathway isoprenoid biosynthesis; isopentenyl diphosphate biosynthesis via DXP pathway; isopentenyl diphosphate from 1-deoxy-D-xylulose 5-phosphate: step 5/6. Functionally, converts 2C-methyl-D-erythritol 2,4-cyclodiphosphate (ME-2,4cPP) into 1-hydroxy-2-methyl-2-(E)-butenyl 4-diphosphate. The protein is 4-hydroxy-3-methylbut-2-en-1-yl diphosphate synthase (flavodoxin) of Wolbachia sp. subsp. Brugia malayi (strain TRS).